The following is a 414-amino-acid chain: Multidrug resistance protein MdtG (414 aa).

Transmembrane regions (helical) follow at residues 14–34, 56–76, 89–109, 113–133, 144–164, 171–191, 219–239, 254–274, 288–308, and 376–396; these read LFVT…IMPF, LVFS…GSLA, ALGM…WQFL, ALLG…ATQV, TLST…GLLA, PVFF…WFYV, ILSL…IAPI, LAFV…ISAP, ILIA…FVQT, and AVFC…YWCL.

It belongs to the major facilitator superfamily. DHA1 family. MdtG (TC 2.A.1.2.20) subfamily.

The protein localises to the cell inner membrane. The protein is Multidrug resistance protein MdtG of Yersinia enterocolitica serotype O:8 / biotype 1B (strain NCTC 13174 / 8081).